The chain runs to 552 residues: Hydroxylamine reductase (552 aa).

4 residues coordinate [2Fe-2S] cluster: Cys-5, Cys-8, Cys-20, and Cys-27. Hybrid [4Fe-2O-2S] cluster-binding residues include His-251, Glu-275, Cys-319, Cys-407, Cys-435, Cys-460, Glu-494, and Lys-496. Cysteine persulfide is present on Cys-407.

This sequence belongs to the HCP family. [2Fe-2S] cluster serves as cofactor. Hybrid [4Fe-2O-2S] cluster is required as a cofactor.

Its subcellular location is the cytoplasm. The catalysed reaction is A + NH4(+) + H2O = hydroxylamine + AH2 + H(+). Its function is as follows. Catalyzes the reduction of hydroxylamine to form NH(3) and H(2)O. This is Hydroxylamine reductase from Shigella sonnei (strain Ss046).